Consider the following 703-residue polypeptide: DnaJ homolog subfamily C member 14 (703 aa).

Residues Met1–Leu11 are compositionally biased toward basic and acidic residues. The disordered stretch occupies residues Met1 to Ser229. Over residues Ser17–Ser28 the composition is skewed to low complexity. The segment covering His75–Pro84 has biased composition (pro residues). The span at Asp91–Val102 shows a compositional bias: acidic residues. Polar residues predominate over residues Ser121 to Gly133. Residues Gly163–Glu176 are compositionally biased toward acidic residues. Residues Pro193–Phe202 show a composition bias toward basic residues. Over residues Leu203–Ala218 the composition is skewed to basic and acidic residues. Residues Pro219–Arg228 show a composition bias toward basic residues. Transmembrane regions (helical) follow at residues Met305–Leu325 and Val327–Trp347. Residues Asn444–Arg508 form the J domain. 2 disordered regions span residues Phe622 to Asp643 and Met659 to Arg703. Polar residues predominate over residues Gly673–Val684. A compositionally biased stretch (basic residues) spans Pro691–Arg703.

Interacts with the FxxxFxxxF motif of DRD1 via its C-terminal domain.

The protein localises to the endoplasmic reticulum membrane. Its function is as follows. Regulates the export of target proteins, such as DRD1, from the endoplasmic reticulum to the cell surface. The sequence is that of DnaJ homolog subfamily C member 14 (Dnajc14) from Mus musculus (Mouse).